A 234-amino-acid polypeptide reads, in one-letter code: tRNA1(Val) (adenine(37)-N6)-methyltransferase (234 aa).

This sequence belongs to the methyltransferase superfamily. tRNA (adenine-N(6)-)-methyltransferase family.

It is found in the cytoplasm. The enzyme catalyses adenosine(37) in tRNA1(Val) + S-adenosyl-L-methionine = N(6)-methyladenosine(37) in tRNA1(Val) + S-adenosyl-L-homocysteine + H(+). Functionally, specifically methylates the adenine in position 37 of tRNA(1)(Val) (anticodon cmo5UAC). The protein is tRNA1(Val) (adenine(37)-N6)-methyltransferase of Aliivibrio fischeri (strain MJ11) (Vibrio fischeri).